Here is a 156-residue protein sequence, read N- to C-terminus: Small ribosomal subunit protein uS7 (156 aa).

The protein belongs to the universal ribosomal protein uS7 family. In terms of assembly, part of the 30S ribosomal subunit. Contacts proteins S9 and S11.

Functionally, one of the primary rRNA binding proteins, it binds directly to 16S rRNA where it nucleates assembly of the head domain of the 30S subunit. Is located at the subunit interface close to the decoding center, probably blocks exit of the E-site tRNA. This chain is Small ribosomal subunit protein uS7, found in Listeria innocua serovar 6a (strain ATCC BAA-680 / CLIP 11262).